The chain runs to 158 residues: NADH-quinone oxidoreductase subunit B (158 aa).

C37, C38, C102, and C132 together coordinate [4Fe-4S] cluster.

This sequence belongs to the complex I 20 kDa subunit family. As to quaternary structure, NDH-1 is composed of 14 different subunits. Subunits NuoB, C, D, E, F, and G constitute the peripheral sector of the complex. It depends on [4Fe-4S] cluster as a cofactor.

It localises to the cell inner membrane. It carries out the reaction a quinone + NADH + 5 H(+)(in) = a quinol + NAD(+) + 4 H(+)(out). Its function is as follows. NDH-1 shuttles electrons from NADH, via FMN and iron-sulfur (Fe-S) centers, to quinones in the respiratory chain. Couples the redox reaction to proton translocation (for every two electrons transferred, four hydrogen ions are translocated across the cytoplasmic membrane), and thus conserves the redox energy in a proton gradient. The sequence is that of NADH-quinone oxidoreductase subunit B from Bordetella petrii (strain ATCC BAA-461 / DSM 12804 / CCUG 43448).